Reading from the N-terminus, the 1482-residue chain is Glutamate receptor ionotropic, NMDA 2B (1482 aa).

Residues 1-26 (MKPSAECCSPKFWLVLAVLAVSGSKA) form the signal peptide. At 27–557 (RSQKSPPSIG…SAFLEPFSAD (531 aa)) the chain is on the extracellular side. An N-linked (GlcNAc...) asparagine glycan is attached at Asn74. Cys86 and Cys321 form a disulfide bridge. The Zn(2+) site is built by His127 and Glu284. N-linked (GlcNAc...) asparagine glycosylation is found at Asn341, Asn348, Asn444, and Asn491. 2 cysteine pairs are disulfide-bonded: Cys429/Cys456 and Cys436/Cys457. Residues Thr514 and Arg519 each coordinate L-glutamate. N-linked (GlcNAc...) asparagine glycosylation occurs at Asn542. A helical transmembrane segment spans residues 558–576 (VWVMMFVMLLIVSAVAVFV). Residues 577 to 603 (FEYFSPVGYNRCLADGREPGGPSFTIG) are Cytoplasmic-facing. Positions 604–623 (KAIWLLWGLVFNNSVPVQNP) form an intramembrane region, discontinuously helical. The pore-forming stretch occupies residues 604–623 (KAIWLLWGLVFNNSVPVQNP). Residues 624–630 (KGTTSKI) are Cytoplasmic-facing. Residues 631–646 (MVSVWAFFAVIFLASY) form a helical membrane-spanning segment. Over 647 to 817 (TANLAAFMIQ…VMSSQLDIDN (171 aa)) the chain is Extracellular. Asn688 is a glycosylation site (N-linked (GlcNAc...) asparagine). 3 residues coordinate L-glutamate: Ser690, Thr691, and Asp732. The cysteines at positions 746 and 801 are disulfide-linked. Residues 818–837 (MAGVFYMLGAAMALSLITFI) traverse the membrane as a helical segment. Topologically, residues 838-1482 (CEHLFYWQFR…EKLSSIESDV (645 aa)) are cytoplasmic. Residues Ser882, Ser886, Ser917, and Ser920 each carry the phosphoserine modification. Phosphotyrosine occurs at positions 962 and 1039. Phosphoserine is present on residues Ser1058, Ser1061, and Ser1064. Residues Tyr1109 and Tyr1133 each carry the phosphotyrosine modification. Residue Ser1143 is modified to Phosphoserine. At Tyr1155 the chain carries Phosphotyrosine. Positions 1161–1194 (DFKRDSVSGGGPCTNRSHLKHGTGEKHGVVGGVP) are disordered. Phosphoserine occurs at positions 1255 and 1259. Residues 1269–1301 (PVAVTSNASSTKYPQSPTNSKAQKKNRNKLRRQ) form a disordered region. A compositionally biased stretch (polar residues) spans 1272–1289 (VTSNASSTKYPQSPTNSK). Positions 1290-1301 (AQKKNRNKLRRQ) are enriched in basic residues. An interaction with DAPK1 region spans residues 1292–1304 (KKNRNKLRRQHSY). Ser1303 is subject to Phosphoserine. Position 1472 is a phosphotyrosine (Tyr1472). Positions 1480 to 1482 (SDV) match the PDZ-binding motif.

It belongs to the glutamate-gated ion channel (TC 1.A.10.1) family. NR2B/GRIN2B subfamily. In terms of assembly, heterotetramer. Forms heterotetrameric channels composed of two GluN1/zeta subunits (GRIN1), and two identical GluN2/epsilon subunits (GRIN2A, GRIN2B, GRIN2C or GRIN2D) or GluN3 subunits (GRIN3A or GRIN3B) (in vitro). Can also form heterotetrameric channels that contain at least two GluN1 subunits and at least two different GluN2 subunits (or a combination of one GluN2 and one GluN3 subunits) (in vitro). In vivo, the subunit composition may depend on the expression levels of the different subunits. Found in a complex with GRIN1, GRIN3A and PPP2CB. Found in a complex with GRIN1 and GRIN3B. Interacts with MAGI3. Interacts with HIP1 and NETO1. Interacts with PDZ domains of PATJ, DLG3 and DLG4. Interacts with DAPK1. Found in a complex with GRIN1 and PRR7. Interacts with PRR7. Interacts with CAMK2A. Interacts with ARC; preventing ARC oligomerization. Interacts with TMEM25. Interacts (via the extreme C-terminus) with FRMPD2 (via the second PDZ domain); the interaction is direct and is likely to promote NMDAR-mediated neural signal transmission. Interacts with FAM81A; the interaction facilitates condensate formation via liquid-liquid phase separation. In terms of processing, phosphorylated on tyrosine residues. Phosphorylation at Ser-1303 by DAPK1 enhances synaptic NMDA receptor channel activity. Expressed in the hippocampus including the dentate gyrus (at protein level). Detected in adult olfactory bulb, brain cortex, hippocampus, striatum, thalamus, superior colliculus, with much lower levels in inferior colliculus, midbrain and cerebellum.

The protein localises to the cell membrane. It localises to the postsynaptic cell membrane. Its subcellular location is the late endosome. It is found in the lysosome. The protein resides in the cytoplasm. The protein localises to the cytoskeleton. It carries out the reaction Ca(2+)(in) = Ca(2+)(out). It catalyses the reaction Na(+)(in) = Na(+)(out). The catalysed reaction is K(+)(in) = K(+)(out). NMDA glutamate receptor activity is inhibited by micromolar levels of zinc ions. NMDA glutamate receptor activity is inhibited by ifenprodil. Component of N-methyl-D-aspartate (NMDA) receptors (NMDARs) that function as heterotetrameric, ligand-gated cation channels with high calcium permeability and voltage-dependent block by Mg(2+). Participates in synaptic plasticity for learning and memory formation by contributing to the long-term depression (LTD) of hippocampus membrane currents. Channel activation requires binding of the neurotransmitter L-glutamate to the GluN2 subunit, glycine or D-serine binding to the GluN1 subunit, plus membrane depolarization to eliminate channel inhibition by Mg(2+). NMDARs mediate simultaneously the potasium efflux and the influx of calcium and sodium. Each GluN2 subunit confers differential attributes to channel properties, including activation, deactivation and desensitization kinetics, pH sensitivity, Ca2(+) permeability, and binding to allosteric modulators. In concert with DAPK1 at extrasynaptic sites, acts as a central mediator for stroke damage. Its phosphorylation at Ser-1303 by DAPK1 enhances synaptic NMDA receptor channel activity inducing injurious Ca2+ influx through them, resulting in an irreversible neuronal death. The protein is Glutamate receptor ionotropic, NMDA 2B of Rattus norvegicus (Rat).